A 454-amino-acid chain; its full sequence is CBL-interacting protein kinase 33 (454 aa).

The region spanning tyrosine 13–phenylalanine 268 is the Protein kinase domain. Residues isoleucine 19–valine 27 and lysine 42 contribute to the ATP site. Aspartate 136 acts as the Proton acceptor in catalysis. The activation loop stretch occupies residues aspartate 154–glutamate 183. The 25-residue stretch at glutamate 305–aspartate 329 folds into the NAF domain. Residues lysine 335–valine 364 form a PPI region.

Belongs to the protein kinase superfamily. CAMK Ser/Thr protein kinase family. SNF1 subfamily. Mn(2+) serves as cofactor.

The enzyme catalyses L-seryl-[protein] + ATP = O-phospho-L-seryl-[protein] + ADP + H(+). It catalyses the reaction L-threonyl-[protein] + ATP = O-phospho-L-threonyl-[protein] + ADP + H(+). In terms of biological role, CIPK serine-threonine protein kinases interact with CBL proteins. Binding of a CBL protein to the regulatory NAF domain of CIPK protein lead to the activation of the kinase in a calcium-dependent manner. The sequence is that of CBL-interacting protein kinase 33 (CIPK33) from Oryza sativa subsp. japonica (Rice).